Reading from the N-terminus, the 89-residue chain is Pyrin domain-containing protein 1 (89 aa).

Residues 1–89 (MGTKREAILK…EEAARLQRAA (89 aa)) enclose the Pyrin domain.

In terms of assembly, interacts with PYCARD/ASC (via pyrin domain). In terms of processing, phosphorylated. In terms of tissue distribution, predominantly expressed in monocytes, macrophages and granulocytes.

The protein localises to the cytoplasm. Associates with PYCARD/ASC and modulates its ability to collaborate with MEFV/pyrin and NLRP3/cryopyrin in NF-kappa-B and pro-caspase-1 activation. Suppresses kinase activity of NF-kappa-B inhibitor kinase (IKK) complex, expression of NF-kappa-B inducible genes and inhibits NF-kappa-B activation by cytokines and LPS. The polypeptide is Pyrin domain-containing protein 1 (Homo sapiens (Human)).